A 105-amino-acid polypeptide reads, in one-letter code: Heat shock protein HspQ (105 aa).

Residues 75–105 are disordered; sequence SELQDEHPEQPSMDELAQTIRKQLQAPRLRN.

The protein belongs to the HspQ family.

The protein resides in the cytoplasm. In terms of biological role, involved in the degradation of certain denaturated proteins, including DnaA, during heat shock stress. This Escherichia coli O127:H6 (strain E2348/69 / EPEC) protein is Heat shock protein HspQ.